The following is a 374-amino-acid chain: F-box/LRR-repeat protein 8 (374 aa).

Positions 2–48 constitute an F-box domain; that stretch reads AEPGEQLPEEVLALIFRHLPLPDRAAAARVCRAWAAAATCSAVWHDT.

As to quaternary structure, directly interacts with SKP1 and CUL1.

Its function is as follows. Substrate-recognition component of the SCF (SKP1-CUL1-F-box protein)-type E3 ubiquitin ligase complex. The chain is F-box/LRR-repeat protein 8 (FBXL8) from Bos taurus (Bovine).